The chain runs to 277 residues: Large ribosomal subunit protein uL2 (277 aa).

Positions 223–277 (VVMNPIDHPHGGGEGRTSGGRHPVTPWGKPTKGKKTRSNKSTNKFILISRHKRKK) are disordered.

Belongs to the universal ribosomal protein uL2 family. In terms of assembly, part of the 50S ribosomal subunit. Forms a bridge to the 30S subunit in the 70S ribosome.

Functionally, one of the primary rRNA binding proteins. Required for association of the 30S and 50S subunits to form the 70S ribosome, for tRNA binding and peptide bond formation. It has been suggested to have peptidyltransferase activity; this is somewhat controversial. Makes several contacts with the 16S rRNA in the 70S ribosome. This Nitrobacter hamburgensis (strain DSM 10229 / NCIMB 13809 / X14) protein is Large ribosomal subunit protein uL2.